A 366-amino-acid chain; its full sequence is Di-N-acetylchitobiase (366 aa).

A signal peptide spans 1–22 (MALCGLPEFTLLLLPLLARLSA). In terms of domain architecture, GH18 spans 23-366 (GDCPCSEAAL…EMWGALKPRL (344 aa)). Glu-127 acts as the Proton donor in catalysis. Asn-131, Asn-177, Asn-212, Asn-246, and Asn-283 each carry an N-linked (GlcNAc...) asparagine glycan.

The protein belongs to the glycosyl hydrolase 18 family.

The protein localises to the lysosome. In terms of biological role, involved in the degradation of asparagine-linked glycoproteins. Hydrolyze of N-acetyl-beta-D-glucosamine (1-4)N-acetylglucosamine chitobiose core from the reducing end of the bond, it requires prior cleavage by glycosylasparaginase. This chain is Di-N-acetylchitobiase (Ctbs), found in Mus musculus (Mouse).